A 119-amino-acid chain; its full sequence is Large ribosomal subunit protein bL20 (119 aa).

It belongs to the bacterial ribosomal protein bL20 family.

Functionally, binds directly to 23S ribosomal RNA and is necessary for the in vitro assembly process of the 50S ribosomal subunit. It is not involved in the protein synthesizing functions of that subunit. The sequence is that of Large ribosomal subunit protein bL20 from Shouchella clausii (strain KSM-K16) (Alkalihalobacillus clausii).